Reading from the N-terminus, the 257-residue chain is Phosphonates import ATP-binding protein PhnC (257 aa).

The ABC transporter domain maps to 4–248 (IEFKNVSKVY…VFSEIYGRTI (245 aa)). 37–44 (GLSGAGKS) is an ATP binding site.

This sequence belongs to the ABC transporter superfamily. Phosphonates importer (TC 3.A.1.9.1) family. In terms of assembly, the complex is composed of two ATP-binding proteins (PhnC), two transmembrane proteins (PhnE) and a solute-binding protein (PhnD).

It is found in the cell membrane. The catalysed reaction is phosphonate(out) + ATP + H2O = phosphonate(in) + ADP + phosphate + H(+). Functionally, part of the ABC transporter complex PhnCDE involved in phosphonates import. Responsible for energy coupling to the transport system. The sequence is that of Phosphonates import ATP-binding protein PhnC from Staphylococcus aureus (strain COL).